The chain runs to 510 residues: 2,3-bisphosphoglycerate-independent phosphoglycerate mutase (510 aa).

Asp12 contacts Mn(2+). A Phosphotyrosine modification is found at Tyr36. Ser62 contributes to the Mn(2+) binding site. The active-site Phosphoserine intermediate is Ser62. Residues His123, 153 to 154 (RD), Arg185, Arg191, 261 to 264 (RPDR), and Lys336 each bind substrate. Asp403, His407, Asp444, His445, and His462 together coordinate Mn(2+).

The protein belongs to the BPG-independent phosphoglycerate mutase family. As to quaternary structure, monomer. Mn(2+) is required as a cofactor.

The catalysed reaction is (2R)-2-phosphoglycerate = (2R)-3-phosphoglycerate. The protein operates within carbohydrate degradation; glycolysis; pyruvate from D-glyceraldehyde 3-phosphate: step 3/5. Functionally, essential for rapid growth and for sporulation. Catalyzes the interconversion of 2-phosphoglycerate and 3-phosphoglycerate. This chain is 2,3-bisphosphoglycerate-independent phosphoglycerate mutase, found in Halalkalibacterium halodurans (strain ATCC BAA-125 / DSM 18197 / FERM 7344 / JCM 9153 / C-125) (Bacillus halodurans).